Reading from the N-terminus, the 780-residue chain is Dynamin-related protein 3B (780 aa).

N-acetylserine is present on serine 2. Residues 40–315 enclose the Dynamin-type G domain; the sequence is TIALPQVAVV…LVQHIKALLP (276 aa). Residues 50 to 57 form a G1 motif region; sequence GSQSSGKS. Residue 50–57 coordinates GTP; that stretch reads GSQSSGKS. The interval 76-78 is G2 motif; the sequence is CTR. The G3 motif stretch occupies residues 157 to 160; that stretch reads DLPG. GTP contacts are provided by residues 157–161 and 226–229; these read DLPGI and TKLD. The tract at residues 226 to 229 is G4 motif; the sequence is TKLD. The G5 motif stretch occupies residues 256–259; the sequence is VNRS. Disordered stretches follow at residues 536–558 and 573–592; these read PVAR…QIKT and QAVP…STSW. Residues 539–548 show a composition bias toward basic and acidic residues; it reads RPRDTVEPER. Residues 549-558 show a composition bias toward polar residues; it reads TASSGSQIKT. One can recognise a GED domain in the interval 654-745; sequence IEITKLLLKS…TLDELPLEAE (92 aa). Positions 753 to 770 are enriched in basic and acidic residues; the sequence is IGSEAKHEELPGTRRSRT. The disordered stretch occupies residues 753–780; sequence IGSEAKHEELPGTRRSRTETNGNGRLHM. A compositionally biased stretch (polar residues) spans 771 to 780; sequence ETNGNGRLHM.

Belongs to the TRAFAC class dynamin-like GTPase superfamily. Dynamin/Fzo/YdjA family. As to quaternary structure, interacts with ARC5 on peroxisomes and ELM1 on mitochondria.

It is found in the mitochondrion. It localises to the peroxisome. Functionally, involved in the control of mitochondrial and peroxisomal division and morphology. The polypeptide is Dynamin-related protein 3B (DRP3B) (Arabidopsis thaliana (Mouse-ear cress)).